The chain runs to 928 residues: G-protein coupled receptor family C group 6 member A (928 aa).

The first 20 residues, 1-20, serve as a signal peptide directing secretion; that stretch reads MALLITVVTCFMIILDTSQS. At 21 to 594 the chain is on the extracellular side; sequence CHTPDDFVAI…EYLDWDDSLA (574 aa). 3 N-linked (GlcNAc...) asparagine glycosylation sites follow: Asn332, Asn555, and Asn567. The helical transmembrane segment at 595-615 threads the bilayer; the sequence is LLLIALSLLGIAFVLAIGIIF. The Cytoplasmic segment spans residues 616–630; that stretch reads TRNLKTPVVKSSGGL. Residues 631–651 form a helical membrane-spanning segment; the sequence is VVCYVMLICHALNFASTGFFI. The Extracellular portion of the chain corresponds to 652 to 669; sequence GEPQDFACKTRQTLFGVS. A helical membrane pass occupies residues 670-690; sequence FTLCVSCILTKSLKILLAFSF. The Cytoplasmic segment spans residues 691-706; sequence DPKLTMFLKCLYRPVP. Residues 707–727 form a helical membrane-spanning segment; the sequence is IVLTCTGIQVVICTLWLVLAA. At 728 to 750 the chain is on the extracellular side; that stretch reads PSVEENISLPRVIILECEEGSAL. A helical membrane pass occupies residues 751–771; that stretch reads AFGTMLGYITVLAFICFVFAF. Topologically, residues 772 to 784 are cytoplasmic; that stretch reads KGRKLPENYNEAK. Residues 785–805 traverse the membrane as a helical segment; sequence FLTFGMLIYFIAWITFIPVYT. Topologically, residues 806–812 are extracellular; the sequence is TTFGKYL. Residues 813-833 form a helical membrane-spanning segment; sequence PAVEIIVILISNYGILCCIFF. Residues 834–928 lie on the Cytoplasmic side of the membrane; that stretch reads PKCYIILCKQ…TLRQKRSSSI (95 aa).

It belongs to the G-protein coupled receptor 3 family. In terms of assembly, homodimer; disulfide-linked. In terms of processing, N-glycosylated. As to expression, expressed at high level in liver, lung, spleen and heart. Expressed at lower level in kidney, skeletal muscle and brain. Expressed in 7 dpc, 11 dpc, 15 dpc and 17 dpc embryos.

It is found in the cell membrane. Receptor activated by multiple ligands, including osteocalcin (BGLAP), basic amino acids, and various cations. Activated by amino acids with a preference for basic amino acids such as L-Lys, L-Arg and L-ornithine but also by small and polar amino acids. The L-alpha amino acids respond is augmented by divalent cations Ca(2+) and Mg(2+). Seems to act through a G(q)/G(11) and G(i)-coupled pathway. Regulates testosterone production by acting as a ligand for uncarboxylated osteocalcin hormone: osteocalcin-binding at the surface of Leydig cells initiates a signaling response that promotes the expression of enzymes required for testosterone synthesis in a CREB-dependent manner. Mediates the non-genomic effects of androgens in multiple tissue. May coordinate nutritional and hormonal anabolic signals through the sensing of extracellular amino acids, osteocalcin, divalent ions and its responsiveness to anabolic steroids. This chain is G-protein coupled receptor family C group 6 member A (Gprc6a), found in Mus musculus (Mouse).